A 356-amino-acid chain; its full sequence is NF-kappa-B inhibitor beta (356 aa).

Phosphoserine; by RPS6KA1 is present on residues S19 and S23. ANK repeat units lie at residues 57-86 (DGDTALHLAVIHQHEPFLDFLLGFSAGTEY), 93-122 (LGQTALHLAAILGETSTVEKLYAAGAGLCV), and 126-155 (RGHTALHLACRVGAHACARALLQPRPRRPR). Residues 149 to 193 (PRPRRPREAPDTYLAQGPDRTPDTNHTPVALYPDSDLEKEEEESE) are disordered. S183 is subject to Phosphoserine. Acidic residues predominate over residues 183–193 (SDLEKEEEESE). ANK repeat units lie at residues 206–235 (EGHTPLHVAVIHKDVEMVRLLRDAGADLDK), 240–269 (CGRSPLHLAVEAQAADVLELLLRAGANPAA), and 273–302 (GGRTPLGSAMLRPNPILARLLRAHGAPEPE). A disordered region spans residues 298–356 (APEPEGEDEKSGPCSSSSDSDSGDEGDEYDDIVVHSSRSQTRLPPTPASKPLPDDPRPV). Phosphoserine; by CK2 is present on residues S313 and S315. Over residues 318-328 (DSGDEGDEYDD) the composition is skewed to acidic residues.

This sequence belongs to the NF-kappa-B inhibitor family. As to quaternary structure, interacts with THRB (via ligand-binding domain). Interacts with RELA and REL. Interacts with COMMD1. Interacts with inhibitor kappa B-interacting Ras-like NKIRAS1 and NKIRAS2. Post-translationally, phosphorylated by RPS6KA1; followed by degradation. Interaction with NKIRAS1 and NKIRAS2 probably prevents phosphorylation. In terms of tissue distribution, expressed in all tissues examined.

Its subcellular location is the cytoplasm. The protein resides in the nucleus. Functionally, inhibits NF-kappa-B by complexing with and trapping it in the cytoplasm. However, the unphosphorylated form resynthesized after cell stimulation is able to bind NF-kappa-B allowing its transport to the nucleus and protecting it to further NFKBIA-dependent inactivation. Association with inhibitor kappa B-interacting NKIRAS1 and NKIRAS2 prevent its phosphorylation rendering it more resistant to degradation, explaining its slower degradation. In Homo sapiens (Human), this protein is NF-kappa-B inhibitor beta (NFKBIB).